The chain runs to 207 residues: UPF0319 protein VV1_2115 (207 aa).

Positions 1–18 (MLRVLGLAGMLMSFNIHA) are cleaved as a signal peptide.

It belongs to the UPF0319 family.

In Vibrio vulnificus (strain CMCP6), this protein is UPF0319 protein VV1_2115.